A 214-amino-acid polypeptide reads, in one-letter code: Redox-sensing transcriptional repressor Rex (214 aa).

Residues 18 to 57 constitute a DNA-binding region (H-T-H motif); sequence LYYRLVNQLHEKGIDRVNSKTISEALDIDSASIRRDFSYF. Residue 92–97 coordinates NAD(+); sequence GVGNLG.

This sequence belongs to the transcriptional regulatory Rex family. Homodimer.

It localises to the cytoplasm. In terms of biological role, modulates transcription in response to changes in cellular NADH/NAD(+) redox state. In Staphylococcus carnosus (strain TM300), this protein is Redox-sensing transcriptional repressor Rex.